A 465-amino-acid polypeptide reads, in one-letter code: ATP synthase subunit beta (465 aa).

Gly155 to Thr162 serves as a coordination point for ATP.

This sequence belongs to the ATPase alpha/beta chains family. As to quaternary structure, F-type ATPases have 2 components, CF(1) - the catalytic core - and CF(0) - the membrane proton channel. CF(1) has five subunits: alpha(3), beta(3), gamma(1), delta(1), epsilon(1). CF(0) has three main subunits: a(1), b(2) and c(9-12). The alpha and beta chains form an alternating ring which encloses part of the gamma chain. CF(1) is attached to CF(0) by a central stalk formed by the gamma and epsilon chains, while a peripheral stalk is formed by the delta and b chains.

It is found in the cell membrane. The catalysed reaction is ATP + H2O + 4 H(+)(in) = ADP + phosphate + 5 H(+)(out). Functionally, produces ATP from ADP in the presence of a proton gradient across the membrane. The catalytic sites are hosted primarily by the beta subunits. The protein is ATP synthase subunit beta of Buchnera aphidicola subsp. Acyrthosiphon pisum (strain 5A).